The chain runs to 339 residues: Glycerol-3-phosphate dehydrogenase [NAD(P)+] (339 aa).

NADPH contacts are provided by Ser14, Tyr15, His35, and Lys109. The sn-glycerol 3-phosphate site is built by Lys109, Gly138, and Thr140. Residue Ala142 coordinates NADPH. Sn-glycerol 3-phosphate contacts are provided by Lys194, Asp247, Ser257, Arg258, and Asn259. The Proton acceptor role is filled by Lys194. Residue Arg258 coordinates NADPH. NADPH-binding residues include Val282 and Glu284.

It belongs to the NAD-dependent glycerol-3-phosphate dehydrogenase family.

The protein localises to the cytoplasm. The catalysed reaction is sn-glycerol 3-phosphate + NAD(+) = dihydroxyacetone phosphate + NADH + H(+). It catalyses the reaction sn-glycerol 3-phosphate + NADP(+) = dihydroxyacetone phosphate + NADPH + H(+). It functions in the pathway membrane lipid metabolism; glycerophospholipid metabolism. In terms of biological role, catalyzes the reduction of the glycolytic intermediate dihydroxyacetone phosphate (DHAP) to sn-glycerol 3-phosphate (G3P), the key precursor for phospholipid synthesis. In Shewanella amazonensis (strain ATCC BAA-1098 / SB2B), this protein is Glycerol-3-phosphate dehydrogenase [NAD(P)+].